Reading from the N-terminus, the 320-residue chain is Replication-associated protein ORF2 (320 aa).

Residues Tyr-188 and Tyr-192 each act as O-(5'-phospho-DNA)-tyrosine intermediate in the active site.

This sequence belongs to the microviridae Rep protein family.

The catalysed reaction is ATP + (deoxyribonucleotide)n-3'-hydroxyl + 5'-phospho-(deoxyribonucleotide)m = (deoxyribonucleotide)n+m + AMP + diphosphate.. In terms of biological role, plays an essential role in viral DNA replication. Binds the origin of replication and cleaves the dsDNA replicative form I (RFI) and becomes covalently bound to it via phosphotyrosine bond, generating the dsDNA replicative form II (RFII). In turn, viral DNA replication initiates at the 3'-OH of the cleavage site. After one round of rolling circle synthesis, protein ORF2 is linked to the newly synthesized ssDNA and joins the ends of the displaced strand to generate a circular single-stranded molecule ready to be packed into a virion. The protein is Replication-associated protein ORF2 of Spiroplasma virus 4 (SpV4).